A 134-amino-acid polypeptide reads, in one-letter code: Protein NrdI (134 aa).

The protein belongs to the NrdI family.

Its function is as follows. Probably involved in ribonucleotide reductase function. In Serratia proteamaculans (strain 568), this protein is Protein NrdI.